The sequence spans 426 residues: Aspartate aminotransferase, mitochondrial (426 aa).

A mitochondrion-targeting transit peptide spans 1 to 29; that stretch reads MIRSARLISNIKFGQKNIRQFSTNTNWWA. Substrate is bound by residues G60, W156, and N209. Position 273 is an N6-(pyridoxal phosphate)lysine (K273). Residue R401 coordinates substrate.

This sequence belongs to the class-I pyridoxal-phosphate-dependent aminotransferase family. Homodimer. It depends on pyridoxal 5'-phosphate as a cofactor.

The protein localises to the mitochondrion matrix. It is found in the cell membrane. It carries out the reaction L-aspartate + 2-oxoglutarate = oxaloacetate + L-glutamate. It catalyses the reaction L-kynurenine + 2-oxoglutarate = kynurenate + L-glutamate + H2O. Functionally, plays a key role in amino acid metabolism. Important for metabolite exchange between mitochondria and cytosol. This is Aspartate aminotransferase, mitochondrial (aatA) from Dictyostelium discoideum (Social amoeba).